The sequence spans 160 residues: Ribosome-binding factor A (160 aa).

Over residues K112–E122 the composition is skewed to basic and acidic residues. A disordered region spans residues K112–K160. Residues E141–K160 are compositionally biased toward acidic residues.

The protein belongs to the RbfA family. As to quaternary structure, monomer. Binds 30S ribosomal subunits, but not 50S ribosomal subunits or 70S ribosomes.

Its subcellular location is the cytoplasm. In terms of biological role, one of several proteins that assist in the late maturation steps of the functional core of the 30S ribosomal subunit. Associates with free 30S ribosomal subunits (but not with 30S subunits that are part of 70S ribosomes or polysomes). Required for efficient processing of 16S rRNA. May interact with the 5'-terminal helix region of 16S rRNA. In Streptomyces coelicolor (strain ATCC BAA-471 / A3(2) / M145), this protein is Ribosome-binding factor A.